Consider the following 311-residue polypeptide: Probable branched-chain-amino-acid aminotransferase (311 aa).

Position 160 is an N6-(pyridoxal phosphate)lysine (Lys160).

This sequence belongs to the class-IV pyridoxal-phosphate-dependent aminotransferase family. Pyridoxal 5'-phosphate is required as a cofactor.

It catalyses the reaction L-leucine + 2-oxoglutarate = 4-methyl-2-oxopentanoate + L-glutamate. The enzyme catalyses L-isoleucine + 2-oxoglutarate = (S)-3-methyl-2-oxopentanoate + L-glutamate. It carries out the reaction L-valine + 2-oxoglutarate = 3-methyl-2-oxobutanoate + L-glutamate. It participates in amino-acid biosynthesis; L-isoleucine biosynthesis; L-isoleucine from 2-oxobutanoate: step 4/4. The protein operates within amino-acid biosynthesis; L-leucine biosynthesis; L-leucine from 3-methyl-2-oxobutanoate: step 4/4. It functions in the pathway amino-acid biosynthesis; L-valine biosynthesis; L-valine from pyruvate: step 4/4. Its function is as follows. Acts on leucine, isoleucine and valine. The polypeptide is Probable branched-chain-amino-acid aminotransferase (ilvE) (Aquifex aeolicus (strain VF5)).